The primary structure comprises 2387 residues: Paternally-expressed gene 3 protein (2387 aa).

The region spanning 44-126 (HQRFRNFLYV…ALLEDYEAMY (83 aa)) is the SCAN box domain. Disordered regions lie at residues 127–194 (EPED…RDLA), 262–305 (DGHS…ICEA), 321–371 (ARSS…AFGG), and 392–423 (RYHFDAEGQGPVHDPRGGARKRPFECGGEARR). 4 stretches are compositionally biased toward basic and acidic residues: residues 160 to 179 (SERERRRGRSRDMESRDRWP), 291 to 305 (PETKKSAHRRGICEA), 321 to 364 (ARSS…ERGP), and 404 to 423 (HDPRGGARKRPFECGGEARR). A C2H2-type 1 zinc finger spans residues 451-473 (YVCDECGRSFAVISEFVEHQIVH). A disordered region spans residues 492–542 (SEAQSRPEGARRSEGAQAAGLAEHRGGQAQEHLRGSGDEEQDEPFLPSPTF). Basic and acidic residues predominate over residues 513–528 (AEHRGGQAQEHLRGSG). 2 C2H2-type zinc fingers span residues 555–577 (YECKVCKETFLHSSALIEHQKIH) and 610–632 (YECKVCGETFHHSAALREHQKTH). Residues 668–690 (YDFREGGDAFGRSSDFMEHQKIH) form a C2H2-type 4; degenerate zinc finger. Disordered stretches follow at residues 704–747 (PLLH…EARG), 764–797 (FRPPRGLREDGEPSTYLSGLRDPPQKTPAWESPY), and 820–858 (DHLAGEGPSGWQRDGEASGPSSDGRQHQKARAKKKNIER). Polar residues predominate over residues 711–720 (MPGSQKSHTI). A compositionally biased stretch (basic residues) spans 846–856 (HQKARAKKKNI). Residues 884 to 906 (YECLECGEFFVRSSELAEHQKIH) form a C2H2-type 5 zinc finger. 57 tandem repeats follow at residues 965–973 (PAQTSYAVE), 974–982 (PAQTSYAEE), 983–991 (PAQTSYTEA), 1001–1009 (PAQTSCIEE), 1010–1018 (PAQTSYTNP), 1028–1036 (PAQTSYTEA), 1046–1054 (PAQTSCIEE), 1055–1063 (PAQTSYTNP), 1073–1081 (PAQTSYTEA), 1091–1099 (PAQTNYTEE), 1109–1117 (PSQTSCIEE), 1118–1126 (PAQTSYTDP), 1136–1144 (PAQTSYTQE), 1145–1153 (PAQTSCTEE), 1154–1162 (PAQTSCTEE), 1163–1171 (PAQTSYTQE), 1172–1180 (PAQTSYTKE), 1190–1198 (PAQTSCIEE), 1199–1207 (PAQTNYTKE), 1217–1225 (PAQTSYTDP), 1235–1243 (PAQTNYTVE), 1253–1261 (PSQTSCIEE), 1280–1288 (PAQTSCTEE), 1289–1297 (PAQTSYTQE), 1298–1306 (PAQTSCTEE), 1307–1315 (PAQTSCTEE), 1316–1324 (PAQTSYTQE), 1325–1333 (PAQTSCTEE), 1334–1342 (PAQTSYTQE), 1343–1351 (PAQTSCTEE), 1352–1360 (PAQTSYTEE), 1361–1369 (PAQTSYTEE), 1370–1378 (PAQTSYTQE), 1379–1387 (PAQTSCTEE), 1388–1396 (PAQTSYTEE), 1397–1405 (PAQTSYTEE), 1406–1414 (PAQTSYTQE), 1415–1423 (PAQTSYTEE), 1424–1432 (PAQTSYTEE), 1433–1441 (PAQTSYAQE), 1442–1450 (PAQTSYAEE), 1451–1459 (PAQTSYAEE), 1460–1468 (PAQTSYAEE), 1469–1477 (PAQTSYTQE), 1478–1486 (PAQTNYTEE), 1496–1504 (PAQTSYAEE), 1505–1513 (PAQTSYPEE), 1514–1522 (PAQTSYAEE), 1523–1531 (PAQTSYAEE), 1532–1540 (PAQTSYPEE), 1541–1549 (PAQTSYTEE), 1550–1558 (PAQTSYAKE), 1559–1567 (PAQTSYPEE), 1568–1576 (PAQTSYAEE), 1577–1585 (PAQTSYAEE), 1586–1594 (PAQTSYAEE), and 1595–1603 (PAQTSYSEE). 2 stretches are compositionally biased toward polar residues: residues 965 to 989 (PAQTSYAVEPAQTSYAEEPAQTSYT) and 1001 to 1020 (PAQTSCIEEPAQTSYTNPAA). A 37 X 9 AA repeat of P-A-Q-T-X-Y-X-X-E region spans residues 965–1603 (PAQTSYAVEP…EPAQTSYSEE (639 aa)). The segment at 965–1651 (PAQTSYAVEP…RPDMPRNQPR (687 aa)) is disordered. Residues 1046-1079 (PAQTSCIEEPAQTSYTNPAAETSYTEEPAQTSYT) show a composition bias toward polar residues. Composition is skewed to polar residues over residues 1107-1178 (EEPS…TSYT), 1190-1206 (PAQTSCIEEPAQTNYTK), 1217-1242 (PAQTSYTDPAAETSYTEEPAQTNYTV), 1251-1484 (EEPS…TNYT), and 1496-1601 (PAQT…TSYS). A C2H2-type 6; degenerate zinc finger spans residues 1859 to 1881 (NECKECGECFATVEDLGRHQKIY). Residues 1900–1921 (LGLDGSPEEELEEQEEPEEPED) form a disordered region. The span at 1905–1921 (SPEEELEEQEEPEEPED) shows a compositional bias: acidic residues. C2H2-type zinc fingers lie at residues 1924–1946 (YGCKDCGLGFADRADLRDHQKVH), 1980–2002 (YECPACGESFVHSSFLFEHQKVH), 2040–2062 (PQCQVCGQDFIHASVLSEHARGH), 2097–2119 (YECETCGESFPSQADLQEHMRVH), and 2148–2170 (YECKDCGKSFIHSTILTKHQKLH). The tract at residues 2059–2102 (ARGHAGEGLPDQGQGGAGAAGPGPAPTEPQQDPGEEQRYECETC) is disordered. Residues 2204-2322 (NVEAAEPEVE…DCGECGETFP (119 aa)) form a disordered region. 2 stretches are compositionally biased toward acidic residues: residues 2208-2228 (AEPEVEAAEPEVEAAEPEVEA) and 2257-2311 (EQPD…EEPY). 2 consecutive C2H2-type zinc fingers follow at residues 2312–2334 (YDCGECGETFPSGAAYAEHLTAH) and 2363–2385 (FKCDVCGQLFSDRLSLARHQNTH).

Belongs to the krueppel C2H2-type zinc-finger protein family. Homodimer. Interacts with SIAH1A and SIAH2. Interacts with TRAF2. As to expression, expressed at high levels in the cerebellum and at moderate levels in the testis and ovary.

Its subcellular location is the nucleus. The protein localises to the cytoplasm. Functionally, induces apoptosis in cooperation with SIAH1A. Acts as a mediator between p53/TP53 and BAX in a neuronal death pathway that is activated by DNA damage. Acts synergistically with TRAF2 and inhibits TNF induced apoptosis through activation of NF-kappa-B. This chain is Paternally-expressed gene 3 protein (PEG3), found in Bos taurus (Bovine).